The following is a 489-amino-acid chain: Ketol-acid reductoisomerase (NADP(+)) (489 aa).

Positions leucine 17–serine 208 constitute a KARI N-terminal Rossmann domain. NADP(+) contacts are provided by residues cysteine 45–glutamine 48, arginine 68, arginine 76, serine 78, and aspartate 108–glutamine 110. Histidine 132 is a catalytic residue. Glycine 158 is an NADP(+) binding site. 2 consecutive KARI C-terminal knotted domains span residues serine 209–proline 344 and glutamine 345–methionine 485. Mg(2+)-binding residues include aspartate 217, glutamate 221, glutamate 389, and glutamate 393. Serine 414 provides a ligand contact to substrate.

Belongs to the ketol-acid reductoisomerase family. Mg(2+) serves as cofactor.

It carries out the reaction (2R)-2,3-dihydroxy-3-methylbutanoate + NADP(+) = (2S)-2-acetolactate + NADPH + H(+). The catalysed reaction is (2R,3R)-2,3-dihydroxy-3-methylpentanoate + NADP(+) = (S)-2-ethyl-2-hydroxy-3-oxobutanoate + NADPH + H(+). The protein operates within amino-acid biosynthesis; L-isoleucine biosynthesis; L-isoleucine from 2-oxobutanoate: step 2/4. It functions in the pathway amino-acid biosynthesis; L-valine biosynthesis; L-valine from pyruvate: step 2/4. Its function is as follows. Involved in the biosynthesis of branched-chain amino acids (BCAA). Catalyzes an alkyl-migration followed by a ketol-acid reduction of (S)-2-acetolactate (S2AL) to yield (R)-2,3-dihydroxy-isovalerate. In the isomerase reaction, S2AL is rearranged via a Mg-dependent methyl migration to produce 3-hydroxy-3-methyl-2-ketobutyrate (HMKB). In the reductase reaction, this 2-ketoacid undergoes a metal-dependent reduction by NADPH to yield (R)-2,3-dihydroxy-isovalerate. The chain is Ketol-acid reductoisomerase (NADP(+)) from Flavobacterium johnsoniae (strain ATCC 17061 / DSM 2064 / JCM 8514 / BCRC 14874 / CCUG 350202 / NBRC 14942 / NCIMB 11054 / UW101) (Cytophaga johnsonae).